The primary structure comprises 219 residues: Histone H1.4 (219 aa).

Residues 1 to 15 (MSETAPAAPAAPAPA) are compositionally biased toward low complexity. Residues 1-41 (MSETAPAAPAAPAPAEKTPIKKKARKAAGGAKRKASGPPVS) are disordered. Ser2 carries the N-acetylserine modification. A Phosphoserine modification is found at Ser2. An N6-acetyllysine modification is found at Lys17. A Phosphothreonine modification is found at Thr18. Residues 20-35 (IKKKARKAAGGAKRKA) show a composition bias toward basic residues. At Lys26 the chain carries N6-acetyllysine; alternate. N6-methyllysine; alternate is present on Lys26. An N6-(beta-hydroxybutyryl)lysine; alternate modification is found at Lys34. At Lys34 the chain carries N6-succinyllysine; alternate. The residue at position 36 (Ser36) is a Phosphoserine. The H15 domain occupies 36 to 109 (SGPPVSELIT…GASGSFKLNK (74 aa)). Lys52 is modified (N6-(beta-hydroxybutyryl)lysine). Position 54 is a citrulline (Arg54). N6-(beta-hydroxybutyryl)lysine is present on residues Lys64, Lys85, Lys90, and Lys106. The tract at residues 92-219 (TLVQTKGTGA…KPKKTAAKKK (128 aa)) is disordered. Residues 119–140 (KAKKAGAAKAKKPAGAAKKPKK) show a composition bias toward basic residues. Position 146 is a phosphothreonine (Thr146). Basic residues-rich tracts occupy residues 149 to 160 (KSTKKTPKKAKK) and 168 to 185 (KKAK…KKAP). Ser150 is modified (ADP-ribosylserine). Phosphoserine is present on Ser187. The span at 192–219 (RAVKPKAAKPKTSKPKAAKPKKTAAKKK) shows a compositional bias: basic residues.

Belongs to the histone H1/H5 family. In terms of processing, H1 histones are progressively phosphorylated during the cell cycle, becoming maximally phosphorylated during late G2 phase and M phase, and being dephosphorylated sharply thereafter. Acetylated at Lys-26. Deacetylated at Lys-26 by SIRT1. Post-translationally, citrullination at Arg-54 (H1R54ci) by PADI4 takes place within the DNA-binding site of H1 and results in its displacement from chromatin and global chromatin decondensation, thereby promoting pluripotency and stem cell maintenance. In terms of processing, ADP-ribosylated on Ser-150 in response to DNA damage.

It is found in the nucleus. The protein localises to the chromosome. Its function is as follows. Histone H1 protein binds to linker DNA between nucleosomes forming the macromolecular structure known as the chromatin fiber. Histones H1 are necessary for the condensation of nucleosome chains into higher-order structured fibers. Also acts as a regulator of individual gene transcription through chromatin remodeling, nucleosome spacing and DNA methylation. This is Histone H1.4 from Rattus norvegicus (Rat).